The sequence spans 116 residues: NADH-quinone oxidoreductase subunit A (116 aa).

A run of 3 helical transmembrane segments spans residues Phe3–Leu23, Phe61–Ile81, and Gln88–Trp108.

Belongs to the complex I subunit 3 family. In terms of assembly, NDH-1 is composed of 14 different subunits. Subunits NuoA, H, J, K, L, M, N constitute the membrane sector of the complex.

It is found in the cell inner membrane. The catalysed reaction is a quinone + NADH + 5 H(+)(in) = a quinol + NAD(+) + 4 H(+)(out). Its function is as follows. NDH-1 shuttles electrons from NADH, via FMN and iron-sulfur (Fe-S) centers, to quinones in the respiratory chain. The immediate electron acceptor for the enzyme in this species is believed to be a menaquinone. Couples the redox reaction to proton translocation (for every two electrons transferred, four hydrogen ions are translocated across the cytoplasmic membrane), and thus conserves the redox energy in a proton gradient. The polypeptide is NADH-quinone oxidoreductase subunit A (Bacteroides fragilis (strain ATCC 25285 / DSM 2151 / CCUG 4856 / JCM 11019 / LMG 10263 / NCTC 9343 / Onslow / VPI 2553 / EN-2)).